The primary structure comprises 874 residues: Alanine--tRNA ligase (874 aa).

Zn(2+) is bound by residues H563, H567, C665, and H669.

This sequence belongs to the class-II aminoacyl-tRNA synthetase family. The cofactor is Zn(2+).

It is found in the cytoplasm. It carries out the reaction tRNA(Ala) + L-alanine + ATP = L-alanyl-tRNA(Ala) + AMP + diphosphate. Catalyzes the attachment of alanine to tRNA(Ala) in a two-step reaction: alanine is first activated by ATP to form Ala-AMP and then transferred to the acceptor end of tRNA(Ala). Also edits incorrectly charged Ser-tRNA(Ala) and Gly-tRNA(Ala) via its editing domain. The polypeptide is Alanine--tRNA ligase (Histophilus somni (strain 129Pt) (Haemophilus somnus)).